Consider the following 286-residue polypeptide: Shikimate dehydrogenase (NADP(+)) (286 aa).

Residues 21 to 23 (TLS) and Thr-68 each bind shikimate. The Proton acceptor role is filled by Lys-72. Residue Asp-84 coordinates NADP(+). 2 residues coordinate shikimate: Asn-93 and Asp-108. NADP(+) is bound by residues 132-136 (GYGGA) and Leu-226. Position 228 (Tyr-228) interacts with shikimate. Gly-249 is a binding site for NADP(+).

It belongs to the shikimate dehydrogenase family. As to quaternary structure, homodimer.

The catalysed reaction is shikimate + NADP(+) = 3-dehydroshikimate + NADPH + H(+). It functions in the pathway metabolic intermediate biosynthesis; chorismate biosynthesis; chorismate from D-erythrose 4-phosphate and phosphoenolpyruvate: step 4/7. Its function is as follows. Involved in the biosynthesis of the chorismate, which leads to the biosynthesis of aromatic amino acids. Catalyzes the reversible NADPH linked reduction of 3-dehydroshikimate (DHSA) to yield shikimate (SA). In Thermosynechococcus vestitus (strain NIES-2133 / IAM M-273 / BP-1), this protein is Shikimate dehydrogenase (NADP(+)).